The chain runs to 1835 residues: AT-rich interactive domain-containing protein 2 (1835 aa).

A2 is subject to N-acetylalanine. Residue S4 is modified to Phosphoserine. Glycyl lysine isopeptide (Lys-Gly) (interchain with G-Cter in SUMO2) cross-links involve residues K7, K15, and K119. The ARID domain occupies 13–105; it reads RRKGLAFLDE…YLEKYEKVHH (93 aa). The LXXLL signature appears at 313–317; it reads LRFLL. Positions 524 to 603 form a DNA-binding region, RFX-type winged-helix; the sequence is ACQWLNAHFE…IHVVGVKRRA (80 aa). K555 is covalently cross-linked (Glycyl lysine isopeptide (Lys-Gly) (interchain with G-Cter in SUMO2)). 2 positions are modified to phosphoserine: S631 and S635. At T653 the chain carries Phosphothreonine. S689 is subject to Phosphoserine. At T692 the chain carries Phosphothreonine. Disordered regions lie at residues 819–844, 962–1057, 1266–1287, 1295–1314, and 1321–1341; these read QQLI…QSQD, LTGQ…SGES, MENP…KENE, NGRK…KIQS, and LISN…KQNS. Composition is skewed to low complexity over residues 823-843, 985-996, and 1025-1044; these read TTSP…SQSQ, PTAMSSSSTPQS, and QVQV…QPQQ. S1300 is modified (phosphoserine). The segment covering 1301-1314 has biased composition (polar residues); the sequence is DSSLPPSNSGKIQS. 2 positions are modified to phosphoserine: S1391 and S1496. Disordered stretches follow at residues 1488-1522 and 1572-1629; these read DSGS…AEDT and SAVQ…RKPG. The segment covering 1491 to 1509 has biased composition (polar residues); sequence SKVSHSPALSSDVRSTNGT. Residues 1513 to 1522 are compositionally biased toward basic and acidic residues; it reads KTVKRPAEDT. Residues 1573-1592 are compositionally biased toward polar residues; that stretch reads AVQQKQQHPPTYVQNVVPQN. Low complexity predominate over residues 1602–1623; the sequence is QVQGQPNSSQPSPFSGSSQPGD. The segment at 1632-1657 adopts a C2H2-type zinc-finger fold; sequence FMCLWQSCKKWFQTPSQVFYHAATEH. Glycyl lysine isopeptide (Lys-Gly) (interchain with G-Cter in SUMO2) cross-links involve residues K1701, K1716, and K1731. Residues 1703–1728 are disordered; the sequence is DEPGQAGSQKSSTKQPTVGGTSSTPR. Residues 1708–1728 are compositionally biased toward polar residues; the sequence is AGSQKSSTKQPTVGGTSSTPR.

As to quaternary structure, component of the SWI/SNF-B (PBAF) chromatin remodeling complex, at least composed of SMARCA4/BRG1, SMARCB1/BAF47/SNF5, ACTL6A/BAF53A or ACTL6B/BAF53B, SMARCE1/BAF57, SMARCD1/BAF60A, SMARCD2/BAF60B, perhaps SMARCD3/BAF60C, SMARCC1/BAF155, SMARCC2/BAF170, PBRM1/BAF180, ARID2/BAF200 and actin. Interacts with SRF. Forms complexes with SRF and SRF cofactors MYOCD, NKX2-5 and SRFBP1. Highly expressed in heart.

Its subcellular location is the nucleus. Functionally, involved in transcriptional activation and repression of select genes by chromatin remodeling (alteration of DNA-nucleosome topology). Required for the stability of the SWI/SNF chromatin remodeling complex SWI/SNF-B (PBAF). May be involved in targeting the complex to different genes. May be involved in regulating transcriptional activation of cardiac genes. In Homo sapiens (Human), this protein is AT-rich interactive domain-containing protein 2.